The chain runs to 493 residues: Chromosomal replication initiator protein DnaA (493 aa).

The tract at residues 1 to 105 (MSDTIQQEAP…LMYSIVIDKS (105 aa)) is domain I, interacts with DnaA modulators. A domain II region spans residues 105–152 (SQGQPVTIELPHQIDAAPAERSVRPEAPGQKASAERERLEIARPRFES). Residues 121–140 (APAERSVRPEAPGQKASAER) are disordered. A domain III, AAA+ region region spans residues 153-370 (NLNPKYTFST…GCIVKLLAAH (218 aa)). The ATP site is built by G198, G200, K201, and T202. Residues 371 to 493 (SLDNQEIDLQ…LRKRIEIMSM (123 aa)) form a domain IV, binds dsDNA region.

The protein belongs to the DnaA family. In terms of assembly, oligomerizes as a right-handed, spiral filament on DNA at oriC.

Its subcellular location is the cytoplasm. Plays an essential role in the initiation and regulation of chromosomal replication. ATP-DnaA binds to the origin of replication (oriC) to initiate formation of the DNA replication initiation complex once per cell cycle. Binds the DnaA box (a 9 base pair repeat at the origin) and separates the double-stranded (ds)DNA. Forms a right-handed helical filament on oriC DNA; dsDNA binds to the exterior of the filament while single-stranded (ss)DNA is stabiized in the filament's interior. The ATP-DnaA-oriC complex binds and stabilizes one strand of the AT-rich DNA unwinding element (DUE), permitting loading of DNA polymerase. After initiation quickly degrades to an ADP-DnaA complex that is not apt for DNA replication. Binds acidic phospholipids. In Chlorobaculum tepidum (strain ATCC 49652 / DSM 12025 / NBRC 103806 / TLS) (Chlorobium tepidum), this protein is Chromosomal replication initiator protein DnaA.